A 256-amino-acid chain; its full sequence is H-2 class II histocompatibility antigen, A-K alpha chain (256 aa).

An N-terminal signal peptide occupies residues 1–23 (MPRSRALILGVLALTTMLSLCGG). Positions 24–111 (EDDIEADHVG…KRSNSTPATN (88 aa)) are alpha-1. At 24–218 (EDDIEADHVG…IPAPMSELTE (195 aa)) the chain is on the extracellular side. 2 N-linked (GlcNAc...) asparagine glycosylation sites follow: asparagine 105 and asparagine 145. The interval 112 to 205 (EAPQATVFPK…GLEEPVLKHW (94 aa)) is alpha-2. The Ig-like C1-type domain occupies 114-206 (PQATVFPKSP…LEEPVLKHWE (93 aa)). The cysteines at positions 134 and 190 are disulfide-linked. Residues 206-218 (EPEIPAPMSELTE) form a connecting peptide region. The chain crosses the membrane as a helical span at residues 219-241 (TVVCALGLSVGLVGIVVGTIFII). Topologically, residues 242-256 (QGLRSGGTSRHPGPL) are cytoplasmic.

Belongs to the MHC class II family.

The protein resides in the membrane. This is H-2 class II histocompatibility antigen, A-K alpha chain (H2-Aa) from Mus musculus (Mouse).